Reading from the N-terminus, the 69-residue chain is Protein translocase subunit SecE (69 aa).

Residues 43-63 (VAGAGILVIGFVGFLIYVLLT) form a helical membrane-spanning segment.

Belongs to the SecE/SEC61-gamma family. Component of the Sec protein translocase complex. Heterotrimer consisting of SecY (alpha), SecG (beta) and SecE (gamma) subunits. The heterotrimers can form oligomers, although 1 heterotrimer is thought to be able to translocate proteins. Interacts with the ribosome. May interact with SecDF, and other proteins may be involved.

It localises to the cell membrane. Functionally, essential subunit of the Sec protein translocation channel SecYEG. Clamps together the 2 halves of SecY. May contact the channel plug during translocation. This chain is Protein translocase subunit SecE, found in Methanococcoides burtonii (strain DSM 6242 / NBRC 107633 / OCM 468 / ACE-M).